The chain runs to 369 residues: Core histone macro-H2A.1 (369 aa).

Residues 2 to 117 (SSRGGKKKST…NIHPELLAKK (116 aa)) enclose the Histone H2A domain. Lys7 and Lys9 each carry N6-lactoyllysine; alternate. An N6-methyllysine modification is found at Lys18. Lys116 is subject to N6-acetyllysine; alternate. Lys116 participates in a covalent cross-link: Glycyl lysine isopeptide (Lys-Gly) (interchain with G-Cter in ubiquitin); alternate. A Glycyl lysine isopeptide (Lys-Gly) (interchain with G-Cter in ubiquitin) cross-link involves residue Lys117. The residue at position 123 (Lys123) is an N6-acetyllysine; alternate. Lys123 is subject to N6,N6-dimethyllysine; alternate. Residue Lys123 forms a Glycyl lysine isopeptide (Lys-Gly) (interchain with G-Cter in SUMO2); alternate linkage. Residues 128 to 180 (ITPPPAKKAKSPSQKKPVSKKAGGKKGARKSKKKQGEVSKAASADSTTEGTPA) form a disordered region. Residue Thr129 is modified to Phosphothreonine. Residues 144–160 (PVSKKAGGKKGARKSKK) are compositionally biased toward basic residues. Lys167 is covalently cross-linked (Glycyl lysine isopeptide (Lys-Gly) (interchain with G-Cter in SUMO2)). Phosphoserine is present on residues Ser170 and Ser173. Thr178 carries the phosphothreonine modification. The Macro domain occupies 184–367 (TVLSTKSLFL…IYVQEMAKLD (184 aa)). Lys189 is covalently cross-linked (Glycyl lysine isopeptide (Lys-Gly) (interchain with G-Cter in SUMO2)). Residues Asp203, Ile204, Val226, Ser275, Gly312, Ser313, Gly314, and Asn316 each contribute to the a glycoprotein site. A Glycyl lysine isopeptide (Lys-Gly) (interchain with G-Cter in SUMO2) cross-link involves residue Lys320.

This sequence belongs to the histone H2A family. The nucleosome is a histone octamer containing two molecules each of H2A, H2B, H3 and H4 assembled in one H3-H4 heterotetramer and two H2A-H2B heterodimers. Interacts with HDAC1 and HDAC2. Interacts with SPOP. Part of a complex consisting of MACROH2A1, CUL3 and SPOP. As to quaternary structure, interacts with PARP1. Monoubiquitinated at either Lys-116 or Lys-117. May also be polyubiquitinated. Ubiquitination is mediated by the CUL3/SPOP E3 complex and does not promote proteasomal degradation. Instead, it is required for enrichment in inactive X chromosome chromatin. Widely expressed.

The protein localises to the nucleus. The protein resides in the chromosome. Variant histone H2A which replaces conventional H2A in a subset of nucleosomes where it represses transcription. Nucleosomes wrap and compact DNA into chromatin, limiting DNA accessibility to the cellular machineries which require DNA as a template. Histones thereby play a central role in transcription regulation, DNA repair, DNA replication and chromosomal stability. DNA accessibility is regulated via a complex set of post-translational modifications of histones, also called histone code, and nucleosome remodeling. Involved in stable X chromosome inactivation. Inhibits the binding of transcription factors, including NF-kappa-B, and interferes with the activity of remodeling SWI/SNF complexes. Inhibits histone acetylation by EP300 and recruits class I HDACs, which induces a hypoacetylated state of chromatin. Functionally, isoform that specifically binds poly-ADP-ribose and O-acetyl-ADP-ribose and plays a key role in NAD(+) metabolism. Able to bind to the ends of poly-ADP-ribose chains created by PARP1 and cap them. This prevents PARP1 from further addition of ADP-ribose and thus limits the consumption of nuclear NAD(+), allowing the cell to maintain proper NAD(+) levels in both the nucleus and the mitochondria to promote proper mitochondrial respiration. Increases the expression of genes involved in redox metabolism, including SOD3. Its function is as follows. In contrast to isoform 1, does not bind poly-ADP-ribose. Represses SOD3 gene expression. The sequence is that of Core histone macro-H2A.1 from Homo sapiens (Human).